The chain runs to 390 residues: 1-deoxy-D-xylulose 5-phosphate reductoisomerase (390 aa).

8 residues coordinate NADPH: T10, G11, S12, I13, G36, R37, N38, and N121. Residue K122 coordinates 1-deoxy-D-xylulose 5-phosphate. NADPH is bound at residue E123. A Mn(2+)-binding site is contributed by D147. 4 residues coordinate 1-deoxy-D-xylulose 5-phosphate: S148, E149, S173, and H196. E149 lines the Mn(2+) pocket. G202 is an NADPH binding site. Residues S209, N214, K215, and E218 each contribute to the 1-deoxy-D-xylulose 5-phosphate site. E218 is a Mn(2+) binding site. Residues 367–390 (AASEHGRREAEKRVGARAHAPAGR) are disordered. Residues 370–380 (EHGRREAEKRV) are compositionally biased toward basic and acidic residues.

Belongs to the DXR family. It depends on Mg(2+) as a cofactor. The cofactor is Mn(2+).

It carries out the reaction 2-C-methyl-D-erythritol 4-phosphate + NADP(+) = 1-deoxy-D-xylulose 5-phosphate + NADPH + H(+). It participates in isoprenoid biosynthesis; isopentenyl diphosphate biosynthesis via DXP pathway; isopentenyl diphosphate from 1-deoxy-D-xylulose 5-phosphate: step 1/6. Catalyzes the NADPH-dependent rearrangement and reduction of 1-deoxy-D-xylulose-5-phosphate (DXP) to 2-C-methyl-D-erythritol 4-phosphate (MEP). The sequence is that of 1-deoxy-D-xylulose 5-phosphate reductoisomerase from Anaeromyxobacter sp. (strain K).